The primary structure comprises 251 residues: Phosphate import ATP-binding protein PstB (251 aa).

The 242-residue stretch at 5-246 (IEIENFSAYY…PKNRLTEEYL (242 aa)) folds into the ABC transporter domain. Position 37 to 44 (37 to 44 (GPSGCGKT)) interacts with ATP.

The protein belongs to the ABC transporter superfamily. Phosphate importer (TC 3.A.1.7) family. In terms of assembly, the complex is composed of two ATP-binding proteins (PstB), two transmembrane proteins (PstC and PstA) and a solute-binding protein (PstS).

The protein localises to the cell inner membrane. It carries out the reaction phosphate(out) + ATP + H2O = ADP + 2 phosphate(in) + H(+). Functionally, part of the ABC transporter complex PstSACB involved in phosphate import. Responsible for energy coupling to the transport system. The sequence is that of Phosphate import ATP-binding protein PstB from Thermotoga maritima (strain ATCC 43589 / DSM 3109 / JCM 10099 / NBRC 100826 / MSB8).